The sequence spans 186 residues: Dihydrofolate reductase (186 aa).

The DHFR domain occupies 2 to 180 (RLNVVVAVSE…FTFKFCVYDV (179 aa)). NADP(+)-binding positions include A8 and 14 to 20 (GIGKGGG). Residue 28 to 33 (DMEFFK) coordinates substrate. 51–53 (RVT) lines the NADP(+) pocket. Position 67 (R67) interacts with substrate. NADP(+) contacts are provided by residues 73–75 (SST) and 112–119 (GGYRLYKE).

Belongs to the dihydrofolate reductase family. As to quaternary structure, monomer.

The enzyme catalyses (6S)-5,6,7,8-tetrahydrofolate + NADP(+) = 7,8-dihydrofolate + NADPH + H(+). Its pathway is cofactor biosynthesis; tetrahydrofolate biosynthesis; 5,6,7,8-tetrahydrofolate from 7,8-dihydrofolate: step 1/1. Key enzyme in folate metabolism. Contributes to the de novo mitochondrial thymidylate biosynthesis pathway. Catalyzes an essential reaction for de novo glycine and purine synthesis, and for DNA precursor synthesis. The protein is Dihydrofolate reductase of Schistosoma mansoni (Blood fluke).